The following is a 130-amino-acid chain: Histone H2A type 2 (130 aa).

Positions 1–22 (MSGRGKQGGKTRAKSKTRSSRA) are disordered. S2 carries the N-acetylserine modification. S2 carries the phosphoserine modification. N6-(2-hydroxyisobutyryl)lysine is present on K6. K6 carries the post-translational modification N6-acetyllysine. A compositionally biased stretch (basic residues) spans 7 to 19 (QGGKTRAKSKTRS). K10 bears the N6-(2-hydroxyisobutyryl)lysine; alternate mark. K10 is modified (N6-lactoyllysine; alternate). K10 is subject to N6-succinyllysine. Residues K14 and K16 each participate in a glycyl lysine isopeptide (Lys-Gly) (interchain with G-Cter in ubiquitin) cross-link. At K37 the chain carries N6-(2-hydroxyisobutyryl)lysine; alternate. Position 76 is an N6-(2-hydroxyisobutyryl)lysine (K76). Position 96 is an N6-(2-hydroxyisobutyryl)lysine; alternate (K96). Position 96 is an N6-succinyllysine (K96). K96 bears the N6-glutaryllysine; alternate mark. Q105 carries the N5-methylglutamine modification. An N6-(2-hydroxyisobutyryl)lysine; alternate modification is found at K119. K119 is modified (N6-glutaryllysine; alternate). Residue K120 forms a Glycyl lysine isopeptide (Lys-Gly) (interchain with G-Cter in ubiquitin) linkage.

Belongs to the histone H2A family. In terms of assembly, the nucleosome is a histone octamer containing two molecules each of H2A, H2B, H3 and H4 assembled in one H3-H4 heterotetramer and two H2A-H2B heterodimers. The octamer wraps approximately 147 bp of DNA. In terms of processing, monoubiquitination of Lys-120 (H2AK119Ub) gives a specific tag for epigenetic transcriptional repression. Following DNA double-strand breaks (DSBs), it is ubiquitinated through 'Lys-63' linkage of ubiquitin moieties, leading to the recruitment of repair proteins to sites of DNA damage. H2AK119Ub and ionizing radiation-induced 'Lys-63'-linked ubiquitination are distinct events. Post-translationally, phosphorylation on Ser-2 is enhanced during mitosis. Phosphorylation on Ser-2 directly represses transcription. Glutamine methylation at Gln-105 (H2AQ104me) by FBL is specifically dedicated to polymerase I. It is present at 35S ribosomal DNA locus and impairs binding of the FACT complex.

The protein localises to the nucleus. Its subcellular location is the chromosome. In terms of biological role, core component of nucleosome. Nucleosomes wrap and compact DNA into chromatin, limiting DNA accessibility to the cellular machineries which require DNA as a template. Histones thereby play a central role in transcription regulation, DNA repair, DNA replication and chromosomal stability. DNA accessibility is regulated via a complex set of post-translational modifications of histones, also called histone code, and nucleosome remodeling. This is Histone H2A type 2 from Xenopus laevis (African clawed frog).